Consider the following 329-residue polypeptide: GTPase Obg (329 aa).

The Obg domain occupies 1-159 (MQFIDQARIT…WPLQLELKLL (159 aa)). The 169-residue stretch at 160–328 (AEVGIIGLPN…LLDQVWQLLG (169 aa)) folds into the OBG-type G domain. ATP contacts are provided by residues 166-173 (GLPNAGKS), 191-195 (FTTLV), 213-216 (DIPG), 280-283 (NKLE), and 309-311 (SAV). The Mg(2+) site is built by Ser173 and Thr193.

The protein belongs to the TRAFAC class OBG-HflX-like GTPase superfamily. OBG GTPase family. In terms of assembly, monomer. Mg(2+) is required as a cofactor.

It localises to the cytoplasm. Functionally, an essential GTPase which binds GTP, GDP and possibly (p)ppGpp with moderate affinity, with high nucleotide exchange rates and a fairly low GTP hydrolysis rate. Plays a role in control of the cell cycle, stress response, ribosome biogenesis and in those bacteria that undergo differentiation, in morphogenesis control. The sequence is that of GTPase Obg from Synechococcus sp. (strain WH7803).